Reading from the N-terminus, the 190-residue chain is Selenoprotein S (190 aa).

Residues 28–48 (SLLASYGWYILFSCILLYIVI) form a helical membrane-spanning segment. Residues 78 to 90 (RQEALAAARLRMQ) form a VCP/p97-interacting motif (VIM) region. A disordered region spans residues 115–190 (KIEMWDSMQE…RRGPSSGGUN (76 aa)). Residues 160–174 (RGGGYNPLTGEGGGT) show a composition bias toward gly residues. Residue selenocysteine 189 is a non-standard amino acid, selenocysteine.

Belongs to the selenoprotein S family. In terms of assembly, interacts with DERL1 and (via VIM motif) with VCP, suggesting that it forms a membrane complex with DERL1 that serves as a receptor for VCP. Also interacts with DERL2, DERL3 and SELENOK. The SELENOK-SELENOS complex interacts with VCP. Interacts with CCDC47. Post-translationally, truncated SELENOS proteins produced by failed UGA/Sec decoding are ubiquitinated by the CRL2(KLHDC2) and CRL2(KLHDC3) complexes, which recognizes the glycine (Gly) at the C-terminus of truncated SELENOS proteins. Truncated SELENOS proteins produced by failed UGA/Sec decoding are also ubiquitinated by the CRL5(KLHDC1) complex.

It localises to the endoplasmic reticulum membrane. It is found in the cytoplasm. Involved in the degradation process of misfolded endoplasmic reticulum (ER) luminal proteins. Participates in the transfer of misfolded proteins from the ER to the cytosol, where they are destroyed by the proteasome in a ubiquitin-dependent manner. Probably acts by serving as a linker between DERL1, which mediates the retrotranslocation of misfolded proteins into the cytosol, and the ATPase complex VCP, which mediates the translocation and ubiquitination. The polypeptide is Selenoprotein S (Mus musculus (Mouse)).